A 114-amino-acid polypeptide reads, in one-letter code: U17-barytoxin-Tl1a (114 aa).

The N-terminal stretch at 1–20 (MKTIIVFLSLLVLATKFGDA) is a signal peptide. A propeptide spanning residues 21–74 (NEGVNQEQMKEVIQNEFREDFLNEMAAMSLLQQLEAIESTLLEKEADRNSRQKR) is cleaved from the precursor. 3 disulfide bridges follow: cysteine 75/cysteine 88, cysteine 82/cysteine 93, and cysteine 87/cysteine 108.

It belongs to the neurotoxin 14 (magi-1) family. 03 (ICK-30-40) subfamily. As to expression, expressed by the venom gland.

The protein localises to the secreted. Its function is as follows. Ion channel inhibitor. In Trittame loki (Brush-footed trapdoor spider), this protein is U17-barytoxin-Tl1a.